The chain runs to 260 residues: Triosephosphate isomerase (260 aa).

Asn11–Lys13 is a binding site for substrate. His103 (electrophile) is an active-site residue. The active-site Proton acceptor is the Glu175. Substrate is bound by residues Gly181, Ser220, and Gly241–Gly242.

Belongs to the triosephosphate isomerase family. As to quaternary structure, homodimer.

It is found in the cytoplasm. The catalysed reaction is D-glyceraldehyde 3-phosphate = dihydroxyacetone phosphate. It participates in carbohydrate biosynthesis; gluconeogenesis. It functions in the pathway carbohydrate degradation; glycolysis; D-glyceraldehyde 3-phosphate from glycerone phosphate: step 1/1. Its function is as follows. Involved in the gluconeogenesis. Catalyzes stereospecifically the conversion of dihydroxyacetone phosphate (DHAP) to D-glyceraldehyde-3-phosphate (G3P). In Shewanella denitrificans (strain OS217 / ATCC BAA-1090 / DSM 15013), this protein is Triosephosphate isomerase.